Consider the following 263-residue polypeptide: 3-methyl-2-oxobutanoate hydroxymethyltransferase (263 aa).

Mg(2+)-binding residues include D43 and D82. Residues D43 to S44, D82, and K111 each bind 3-methyl-2-oxobutanoate. E113 is a binding site for Mg(2+). E180 (proton acceptor) is an active-site residue.

Belongs to the PanB family. In terms of assembly, homodecamer; pentamer of dimers. Mg(2+) serves as cofactor.

The protein localises to the cytoplasm. The catalysed reaction is 3-methyl-2-oxobutanoate + (6R)-5,10-methylene-5,6,7,8-tetrahydrofolate + H2O = 2-dehydropantoate + (6S)-5,6,7,8-tetrahydrofolate. Its pathway is cofactor biosynthesis; (R)-pantothenate biosynthesis; (R)-pantoate from 3-methyl-2-oxobutanoate: step 1/2. Its function is as follows. Catalyzes the reversible reaction in which hydroxymethyl group from 5,10-methylenetetrahydrofolate is transferred onto alpha-ketoisovalerate to form ketopantoate. This is 3-methyl-2-oxobutanoate hydroxymethyltransferase from Bdellovibrio bacteriovorus (strain ATCC 15356 / DSM 50701 / NCIMB 9529 / HD100).